The following is a 327-amino-acid chain: 2-methoxy-6-polyprenyl-1,4-benzoquinol methylase, mitochondrial (327 aa).

The transit peptide at 1-49 (MAAPRSCALWSYCGRGWSWAMRGCQLLGLRSSWPGAPLSARLLPQEKRA) directs the protein to the mitochondrion. Residues Thr117, Asp171, and 199–200 (DA) contribute to the S-adenosyl-L-methionine site.

It belongs to the class I-like SAM-binding methyltransferase superfamily. MenG/UbiE family. In terms of assembly, component of a multi-subunit COQ enzyme complex, composed of at least COQ3, COQ4, COQ5, COQ6, COQ7 and COQ9. Interacts with PYURF; the interaction is direct, stabilizes COQ5 protein and associates PYURF with COQ enzyme complex.

The protein localises to the mitochondrion inner membrane. It carries out the reaction 2-methoxy-6-(all-trans-decaprenyl)benzene-1,4-diol + S-adenosyl-L-methionine = 5-methoxy-2-methyl-3-(all-trans-decaprenyl)benzene-1,4-diol + S-adenosyl-L-homocysteine + H(+). It functions in the pathway cofactor biosynthesis; ubiquinone biosynthesis. In terms of biological role, methyltransferase required for the conversion of 2-decaprenyl-6-methoxy-1,4-benzoquinol (DDMQH2) to 2-decaprenyl-3-methyl-6-methoxy-1,4-benzoquinol (DMQH2). The chain is 2-methoxy-6-polyprenyl-1,4-benzoquinol methylase, mitochondrial from Pongo abelii (Sumatran orangutan).